Here is a 220-residue protein sequence, read N- to C-terminus: Translation initiation factor 6 (220 aa).

This sequence belongs to the eIF-6 family.

Binds to the 50S ribosomal subunit and prevents its association with the 30S ribosomal subunit to form the 70S initiation complex. The chain is Translation initiation factor 6 from Pyrobaculum aerophilum (strain ATCC 51768 / DSM 7523 / JCM 9630 / CIP 104966 / NBRC 100827 / IM2).